The sequence spans 293 residues: SAGA-associated factor 29 (293 aa).

A coiled-coil region spans residues glutamate 12–lysine 88. An SGF29 C-terminal domain is found at glycine 152–lysine 293. Histone H3K4me3 N-terminus binding stretches follow at residues aspartate 194–aspartate 196 and glutamine 240–cysteine 243. Residues phenylalanine 264–aspartate 266 form a histone H3K4me3 binding region.

The protein belongs to the SGF29 family. Interacts with dimethylated and trimethylated 'Lys-4' of histone H3 (H3K4me2 and H3K4me3), with a preference for the trimethylated form (H3K4me3). Component of some SAGA-type complexes. Component of the ADA2A-containing complex (ATAC).

The protein resides in the nucleus. Functionally, chromatin reader component of some histone acetyltransferase (HAT) SAGA-type complexes like the TFTC-HAT, ATAC or STAGA complexes. SGF29 specifically recognizes and binds methylated 'Lys-4' of histone H3 (H3K4me), with a preference for trimethylated form (H3K4me3). In the SAGA-type complexes, SGF29 is required to recruit complexes to H3K4me. Also binds non-histone proteins that are methylated on Lys residues. The polypeptide is SAGA-associated factor 29 (Gallus gallus (Chicken)).